We begin with the raw amino-acid sequence, 63 residues long: Small ribosomal subunit protein eS31 (63 aa).

Residues cysteine 31, cysteine 34, cysteine 50, and cysteine 53 each coordinate Zn(2+). Residues 31-53 (CPRCGSIMAHHMKPVERWACGKC) form a C4-type zinc finger.

The protein belongs to the eukaryotic ribosomal protein eS31 family. As to quaternary structure, part of the 30S ribosomal subunit. Zn(2+) serves as cofactor.

This chain is Small ribosomal subunit protein eS31, found in Sulfurisphaera tokodaii (strain DSM 16993 / JCM 10545 / NBRC 100140 / 7) (Sulfolobus tokodaii).